The primary structure comprises 468 residues: ATP synthase subunit beta 3 (468 aa).

155–162 (GGAGVGKT) contributes to the ATP binding site.

The protein belongs to the ATPase alpha/beta chains family. As to quaternary structure, F-type ATPases have 2 components, CF(1) - the catalytic core - and CF(0) - the membrane proton channel. CF(1) has five subunits: alpha(3), beta(3), gamma(1), delta(1), epsilon(1). CF(0) has three main subunits: a(1), b(2) and c(9-12). The alpha and beta chains form an alternating ring which encloses part of the gamma chain. CF(1) is attached to CF(0) by a central stalk formed by the gamma and epsilon chains, while a peripheral stalk is formed by the delta and b chains.

Its subcellular location is the cell inner membrane. The catalysed reaction is ATP + H2O + 4 H(+)(in) = ADP + phosphate + 5 H(+)(out). Produces ATP from ADP in the presence of a proton gradient across the membrane. The catalytic sites are hosted primarily by the beta subunits. The chain is ATP synthase subunit beta 3 from Syntrophotalea carbinolica (strain DSM 2380 / NBRC 103641 / GraBd1) (Pelobacter carbinolicus).